The chain runs to 365 residues: Putative fatty acid elongase 2 (365 aa).

Topologically, residues 1–68 are lumenal; sequence MPDSPTLHHN…SFEFIVNKTR (68 aa). N-linked (GlcNAc...) asparagine glycosylation is found at Asn17 and Asn65. The helical transmembrane segment at 69–89 threads the bilayer; it reads FSSAPVVATIIISYYLLILVG. Residues 90-111 lie on the Cytoplasmic side of the membrane; that stretch reads GRIMRNRQPIRLQKIFQYYNLT. Residues 112–132 traverse the membrane as a helical segment; sequence FSIASAILALLIFEQVAPAIY. Residues 133-149 lie on the Lumenal side of the membrane; it reads KHGFFFSICNEKAWTQP. A helical membrane pass occupies residues 150-170; that stretch reads LVFLYYCAYISKFLELTDTFF. Residues 171–179 lie on the Cytoplasmic side of the membrane; the sequence is LVLRKKPLQ. A helical transmembrane segment spans residues 180 to 198; that stretch reads FLHCYHHGATAVLVYTQIV. Over 199–204 the chain is Lumenal; that stretch reads GRTSIS. A helical transmembrane segment spans residues 205 to 225; the sequence is WLIIEINLLVHVTMYYYYYLV. Over 226-241 the chain is Cytoplasmic; that stretch reads AKGIRVPWKKWVTRFQ. A helical membrane pass occupies residues 242 to 262; that stretch reads IVQFFADLGFIYFAVYTEVAY. Topologically, residues 263 to 278 are lumenal; sequence RLKFYKACMGHCSGHP. The chain crosses the membrane as a helical span at residues 279 to 299; that stretch reads LAAFCGLATISSYLVLFIVFY. Topologically, residues 300–365 are cytoplasmic; sequence HNTYKKNAAL…PISSGLNNEK (66 aa).

The protein belongs to the ELO family.

It is found in the endoplasmic reticulum membrane. The enzyme catalyses a very-long-chain acyl-CoA + malonyl-CoA + H(+) = a very-long-chain 3-oxoacyl-CoA + CO2 + CoA. In terms of biological role, may be involved in the synthesis of very long chain fatty acids. The polypeptide is Putative fatty acid elongase 2 (Schizosaccharomyces pombe (strain 972 / ATCC 24843) (Fission yeast)).